The chain runs to 1039 residues: uncharacterized protein (1039 aa).

Positions 1–19 (MSLLMAHRKSKSSQRKLRN) are enriched in basic residues. The interval 1–38 (MSLLMAHRKSKSSQRKLRNRSSSLTPQKRRIRASKGSH) is disordered.

This is an uncharacterized protein from Sinorhizobium fredii (strain NBRC 101917 / NGR234).